The primary structure comprises 343 residues: Probable magnesium transporter NIPA4 (343 aa).

At 1–18 (MAESSGSWRDSYKGMSSD) the chain is on the extracellular side. A helical transmembrane segment spans residues 19–39 (NIKGLVLALSSSLFIGASFIV). The Cytoplasmic portion of the chain corresponds to 40–66 (KKKGLKKAASTGTRAGVGGYSYLYEPL). The chain crosses the membrane as a helical span at residues 67–87 (WWIGMTTMLLGEIANFAAYAF). The Extracellular segment spans residues 88–90 (APA). The helical transmembrane segment at 91–111 (ILVTPLGAVSIIISAVLAHII) threads the bilayer. The Cytoplasmic portion of the chain corresponds to 112-115 (LREK). Residues 116–136 (LHIFGILGCALCVVGSTTIVL) form a helical membrane-spanning segment. At 137–157 (HAPQEREIDSVIEVWNLATEP) the chain is on the extracellular side. Residues 158–178 (AFMFYASLVIGAAVFLIIRFV) traverse the membrane as a helical segment. Residues 179 to 189 (PQYGQTNVMVY) are Cytoplasmic-facing. Residues 190-210 (IGICSLVGSLSVMSVKALGIA) form a helical membrane-spanning segment. Over 211-220 (LKLTFSGTNQ) the chain is Extracellular. A helical membrane pass occupies residues 221-241 (LFYPQTWIFTLVVLTCVVTQL). At 242–254 (NYLNKALDTFNTA) the chain is on the cytoplasmic side. A helical transmembrane segment spans residues 255–275 (IVSPIYYVMFTSLTILASVIM). Residues 276-283 (FKDWDRQN) lie on the Extracellular side of the membrane. The helical transmembrane segment at 284 to 304 (GTQIVTEICGFVTILSGTFLL) threads the bilayer. The Cytoplasmic segment spans residues 305-343 (HRTKDMVEGSSVILPLRISKHINEEEGIPLRRQESLRSP).

This sequence belongs to the NIPA (TC 2.A.7) family. Homodimer.

It localises to the cell membrane. The protein resides in the early endosome. Functionally, acts as a Mg(2+) transporter. Can also transport other divalent cations such as Fe(2+), Sr(2+), Ba(2+), Mn(2+) and Co(2+) but to a much less extent than Mg(2+). In Arabidopsis thaliana (Mouse-ear cress), this protein is Probable magnesium transporter NIPA4.